Consider the following 117-residue polypeptide: Large ribosomal subunit protein bL20 (117 aa).

The protein belongs to the bacterial ribosomal protein bL20 family.

Binds directly to 23S ribosomal RNA and is necessary for the in vitro assembly process of the 50S ribosomal subunit. It is not involved in the protein synthesizing functions of that subunit. The polypeptide is Large ribosomal subunit protein bL20 (Roseiflexus castenholzii (strain DSM 13941 / HLO8)).